The following is a 116-amino-acid chain: Large ribosomal subunit protein bL20 (116 aa).

This sequence belongs to the bacterial ribosomal protein bL20 family.

Its function is as follows. Binds directly to 23S ribosomal RNA and is necessary for the in vitro assembly process of the 50S ribosomal subunit. It is not involved in the protein synthesizing functions of that subunit. In Helicobacter pylori (strain G27), this protein is Large ribosomal subunit protein bL20.